Consider the following 405-residue polypeptide: MSPCGLNLSLADEAATCATPRLPNTSVVLPTGDNGTSPALPIFSMTLGAVSNVLALALLAQVAGRMRRRRSAATFLLFVASLLAIDLAGHVIPGALVLRLYTAGRAPAGGACHFLGGCMVFFGLCPLLLGCGMAVERCVGVTQPLIHAARVSVARARLALAVLAAMALAVALLPLVHVGRYELQYPGTWCFISLGPRGGWRQALLAGLFAGLGLAALLAALVCNTLSGLALLRARWRRRRSRRFRKTAGPDDRRRWGSRGPRLASASSASSITSATATLRSSRGGGSARRVHAHDVEMVGQLVGIMVVSCICWSPLLVLVVLAIGGWNSNSLQRPLFLAVRLASWNQILDPWVYILLRQAMLRQLLRLLPLRVSAKGGPTELGLTKSAWEASSLRSSRHSGFSHL.

The Extracellular portion of the chain corresponds to 1-39; sequence MSPCGLNLSLADEAATCATPRLPNTSVVLPTGDNGTSPA. N7, N24, and N34 each carry an N-linked (GlcNAc...) asparagine glycan. The helical transmembrane segment at 40-62 threads the bilayer; the sequence is LPIFSMTLGAVSNVLALALLAQV. The Cytoplasmic portion of the chain corresponds to 63–80; the sequence is AGRMRRRRSAATFLLFVA. Residues 81–99 traverse the membrane as a helical segment; it reads SLLAIDLAGHVIPGALVLR. Residues 100 to 113 are Extracellular-facing; it reads LYTAGRAPAGGACH. C112 and C190 are disulfide-bonded. A helical membrane pass occupies residues 114–135; the sequence is FLGGCMVFFGLCPLLLGCGMAV. The Cytoplasmic segment spans residues 136 to 157; it reads ERCVGVTQPLIHAARVSVARAR. A helical membrane pass occupies residues 158–179; sequence LALAVLAAMALAVALLPLVHVG. The Extracellular segment spans residues 180 to 202; the sequence is RYELQYPGTWCFISLGPRGGWRQ. The chain crosses the membrane as a helical span at residues 203–228; that stretch reads ALLAGLFAGLGLAALLAALVCNTLSG. Residues 229–301 lie on the Cytoplasmic side of the membrane; sequence LALLRARWRR…HAHDVEMVGQ (73 aa). The disordered stretch occupies residues 243-287; the sequence is RFRKTAGPDDRRRWGSRGPRLASASSASSITSATATLRSSRGGGS. The segment covering 262-282 has biased composition (low complexity); that stretch reads RLASASSASSITSATATLRSS. Residues 302–323 traverse the membrane as a helical segment; that stretch reads LVGIMVVSCICWSPLLVLVVLA. Residues 324–337 are Extracellular-facing; that stretch reads IGGWNSNSLQRPLF. Residues 338–357 form a helical membrane-spanning segment; that stretch reads LAVRLASWNQILDPWVYILL. The Cytoplasmic segment spans residues 358–405; it reads RQAMLRQLLRLLPLRVSAKGGPTELGLTKSAWEASSLRSSRHSGFSHL.

Belongs to the G-protein coupled receptor 1 family. In terms of processing, phosphorylated. As to expression, abundant in kidney and in a lesser amount in lung.

It is found in the cell membrane. Its function is as follows. Receptor for prostaglandin E2 (PGE2). The activity of this receptor is mediated by G(q) proteins which activate a phosphatidylinositol-calcium second messenger system. May play a role as an important modulator of renal function. Implicated the smooth muscle contractile response to PGE2 in various tissues. The chain is Prostaglandin E2 receptor EP1 subtype (Ptger1) from Mus musculus (Mouse).